The sequence spans 226 residues: Ribonuclease 3 (226 aa).

The RNase III domain occupies 6-128 (INRLQRKLGY…LIGGIFLDSD (123 aa)). Glu41 contacts Mg(2+). Residue Asp45 is part of the active site. Mg(2+) contacts are provided by Asp114 and Glu117. The active site involves Glu117. The DRBM domain maps to 155 to 225 (DPKTRLQEFL…AEQALKKLEL (71 aa)).

The protein belongs to the ribonuclease III family. In terms of assembly, homodimer. It depends on Mg(2+) as a cofactor.

The protein localises to the cytoplasm. The enzyme catalyses Endonucleolytic cleavage to 5'-phosphomonoester.. Digests double-stranded RNA. Involved in the processing of primary rRNA transcript to yield the immediate precursors to the large and small rRNAs (23S and 16S). Processes some mRNAs, and tRNAs when they are encoded in the rRNA operon. Processes pre-crRNA and tracrRNA of type II CRISPR loci if present in the organism. The polypeptide is Ribonuclease 3 (Pectobacterium carotovorum subsp. carotovorum (strain PC1)).